A 146-amino-acid polypeptide reads, in one-letter code: Hemoglobin subunit beta (146 aa).

The Globin domain maps to 2 to 146 (QWTAEEKQLI…VAHALARKYH (145 aa)). Heme b-binding residues include His63 and His92.

This sequence belongs to the globin family. As to quaternary structure, heterotetramer of two alpha chains and two beta chains. Red blood cells.

Functionally, involved in oxygen transport from the lung to the various peripheral tissues. The polypeptide is Hemoglobin subunit beta (HBB) (Passer montanus (Eurasian tree sparrow)).